A 267-amino-acid chain; its full sequence is Tryptophan synthase alpha chain (267 aa).

Active-site proton acceptor residues include Glu49 and Asp60.

This sequence belongs to the TrpA family. In terms of assembly, tetramer of two alpha and two beta chains.

It catalyses the reaction (1S,2R)-1-C-(indol-3-yl)glycerol 3-phosphate + L-serine = D-glyceraldehyde 3-phosphate + L-tryptophan + H2O. It participates in amino-acid biosynthesis; L-tryptophan biosynthesis; L-tryptophan from chorismate: step 5/5. Its function is as follows. The alpha subunit is responsible for the aldol cleavage of indoleglycerol phosphate to indole and glyceraldehyde 3-phosphate. The polypeptide is Tryptophan synthase alpha chain (Acinetobacter baylyi (strain ATCC 33305 / BD413 / ADP1)).